Consider the following 391-residue polypeptide: Phosphoglycerate kinase (391 aa).

Substrate contacts are provided by residues 21 to 23 (DLN), arginine 36, 59 to 62 (HRGR), arginine 113, and arginine 146. ATP is bound by residues lysine 197, glutamate 314, and 340–343 (GGDT).

This sequence belongs to the phosphoglycerate kinase family. In terms of assembly, monomer.

It is found in the cytoplasm. The enzyme catalyses (2R)-3-phosphoglycerate + ATP = (2R)-3-phospho-glyceroyl phosphate + ADP. It functions in the pathway carbohydrate degradation; glycolysis; pyruvate from D-glyceraldehyde 3-phosphate: step 2/5. The chain is Phosphoglycerate kinase from Ruthia magnifica subsp. Calyptogena magnifica.